We begin with the raw amino-acid sequence, 411 residues long: Putative metal tolerance protein C3 (411 aa).

The Cytoplasmic segment spans residues 1–115 (MEVNYCPETP…DRAERAAQEL (115 aa)). Residues 116–136 (AMQISNWANIFLLALKIYATV) form a helical membrane-spanning segment. The Vacuolar segment spans residues 137–140 (KSGS). Residues 141–161 (IAIAASTLDSLLDLMAGGILW) form a helical membrane-spanning segment. Residues 162-184 (FTHLSMKNVNIYKYPIGKLRVQP) lie on the Cytoplasmic side of the membrane. The chain crosses the membrane as a helical span at residues 185–205 (VGIIIFAAVMATLGFQVLLVA). Residues 206-222 (AEQLISNEPSEKMNHVQ) lie on the Vacuolar side of the membrane. A helical transmembrane segment spans residues 223–243 (LIWLYSIMLSATAIKLVLWIY). Over 244-262 (CKSSRNHIVRAYAKDHHFD) the chain is Cytoplasmic. A helical membrane pass occupies residues 263 to 283 (VVTNVLGLVAAVLANAFYWWL). The Vacuolar portion of the chain corresponds to 284 to 287 (DPTG). The chain crosses the membrane as a helical span at residues 288–308 (AILLAIYTIVNWSGTVMENAV). Topologically, residues 309–390 (SLIGQSAPPE…LPEVERAFVH (82 aa)) are cytoplasmic.

This sequence belongs to the cation diffusion facilitator (CDF) transporter (TC 2.A.4) family.

Its subcellular location is the vacuole membrane. Functionally, involved in sequestration of excess metal in the cytoplasm into vacuoles to maintain metal homeostasis. This chain is Putative metal tolerance protein C3 (MTPC3), found in Arabidopsis thaliana (Mouse-ear cress).